A 418-amino-acid polypeptide reads, in one-letter code: Imidazolonepropionase (418 aa).

Residues histidine 79 and histidine 81 each coordinate Fe(3+). Histidine 79 and histidine 81 together coordinate Zn(2+). The 4-imidazolone-5-propanoate site is built by arginine 88, tyrosine 151, and histidine 184. Tyrosine 151 contributes to the N-formimidoyl-L-glutamate binding site. Histidine 249 is a binding site for Fe(3+). Position 249 (histidine 249) interacts with Zn(2+). Glutamine 252 is a binding site for 4-imidazolone-5-propanoate. Aspartate 324 contacts Fe(3+). Aspartate 324 contacts Zn(2+). Residues asparagine 326 and glycine 328 each coordinate N-formimidoyl-L-glutamate. Threonine 329 contacts 4-imidazolone-5-propanoate.

The protein belongs to the metallo-dependent hydrolases superfamily. HutI family. Zn(2+) serves as cofactor. It depends on Fe(3+) as a cofactor.

It is found in the cytoplasm. The catalysed reaction is 4-imidazolone-5-propanoate + H2O = N-formimidoyl-L-glutamate. Its pathway is amino-acid degradation; L-histidine degradation into L-glutamate; N-formimidoyl-L-glutamate from L-histidine: step 3/3. Its function is as follows. Catalyzes the hydrolytic cleavage of the carbon-nitrogen bond in imidazolone-5-propanoate to yield N-formimidoyl-L-glutamate. It is the third step in the universal histidine degradation pathway. This is Imidazolonepropionase from Colwellia psychrerythraea (strain 34H / ATCC BAA-681) (Vibrio psychroerythus).